The chain runs to 514 residues: 2,3-bisphosphoglycerate-independent phosphoglycerate mutase (514 aa).

Mn(2+) is bound by residues Asp-14 and Ser-64. Ser-64 (phosphoserine intermediate) is an active-site residue. Substrate contacts are provided by residues His-125, 155–156 (RD), Arg-187, Arg-193, 263–266 (RADR), and Lys-336. Mn(2+) contacts are provided by Asp-403, His-407, Asp-444, His-445, and His-463.

Belongs to the BPG-independent phosphoglycerate mutase family. Monomer. Requires Mn(2+) as cofactor.

The catalysed reaction is (2R)-2-phosphoglycerate = (2R)-3-phosphoglycerate. It participates in carbohydrate degradation; glycolysis; pyruvate from D-glyceraldehyde 3-phosphate: step 3/5. Its function is as follows. Catalyzes the interconversion of 2-phosphoglycerate and 3-phosphoglycerate. This is 2,3-bisphosphoglycerate-independent phosphoglycerate mutase from Salmonella paratyphi A (strain ATCC 9150 / SARB42).